The chain runs to 190 residues: Shikimate kinase (190 aa).

G13–T18 is a binding site for ATP. T17 is a Mg(2+) binding site. Residues D35, R59, and G81 each contribute to the substrate site. Residue R119 coordinates ATP. R138 serves as a coordination point for substrate. Q155 provides a ligand contact to ATP.

This sequence belongs to the shikimate kinase family. In terms of assembly, monomer. It depends on Mg(2+) as a cofactor.

Its subcellular location is the cytoplasm. The catalysed reaction is shikimate + ATP = 3-phosphoshikimate + ADP + H(+). It functions in the pathway metabolic intermediate biosynthesis; chorismate biosynthesis; chorismate from D-erythrose 4-phosphate and phosphoenolpyruvate: step 5/7. Functionally, catalyzes the specific phosphorylation of the 3-hydroxyl group of shikimic acid using ATP as a cosubstrate. The polypeptide is Shikimate kinase (Nitrosococcus oceani (strain ATCC 19707 / BCRC 17464 / JCM 30415 / NCIMB 11848 / C-107)).